The following is a 552-amino-acid chain: MYEPARQKMIVSLGQEKIPPAHSSVCLLDKWVNTHHTTKKERYQLNVADVFSSYLSKLPNVIIALLVLLIGWAIAKIIEKAVYKGLSKTKIDDKLFAGKKPSRYSSEKVISKVVYFIALIIVFILFFNILHLTTVASPFVSMLSAIAAAIPSVLKAGLILLLGWAAASVLSFLVKKIGMKLNTSDKLRKWNLVSEGKDIHQAVNTASQIVFYLVLLVFLPGVLSSLKISGISGPFTNMMESVLAFLPKLFAAALIVLIGWLVARLVRDIITNFLASIGTERFAARMGLSIYLKDTSLSAVIGTIAYVLIMIPVVISALDQLDVAGISKPAVSMLNTILNMLPNIMIAIVLVLAGIWAGKWVKSMVSGLLHRAGFDSVLGKMGMEAGTPAKLSLSQVVGMIAQIIVILLFTAEALQIVRLHFLVEIATGIIAYLPNVLVAVFILGLGLYAGELVRKVLASMIKGQEFKSLAPIAKYTIIALAFFMALDQLGVAATIVNSAFIIVLSGFALAFGLSFGLGGKDFASRYLSTFERKMQNTEIEKNRKNQNPPNDM.

This is an uncharacterized protein from Bacillus subtilis (strain 168).